A 278-amino-acid polypeptide reads, in one-letter code: Biotin synthase (278 aa).

In terms of domain architecture, Radical SAM core spans 1–227; it reads MQIMLCAISN…QSVVMVAGGR (227 aa). Cys-16, Cys-20, and Cys-23 together coordinate [4Fe-4S] cluster. Positions 60, 95, and 153 each coordinate [2Fe-2S] cluster.

This sequence belongs to the radical SAM superfamily. Biotin synthase family. As to quaternary structure, homodimer. The cofactor is [4Fe-4S] cluster. Requires [2Fe-2S] cluster as cofactor.

The catalysed reaction is (4R,5S)-dethiobiotin + (sulfur carrier)-SH + 2 reduced [2Fe-2S]-[ferredoxin] + 2 S-adenosyl-L-methionine = (sulfur carrier)-H + biotin + 2 5'-deoxyadenosine + 2 L-methionine + 2 oxidized [2Fe-2S]-[ferredoxin]. Its pathway is cofactor biosynthesis; biotin biosynthesis; biotin from 7,8-diaminononanoate: step 2/2. Functionally, catalyzes the conversion of dethiobiotin (DTB) to biotin by the insertion of a sulfur atom into dethiobiotin via a radical-based mechanism. The chain is Biotin synthase from Campylobacter jejuni subsp. jejuni serotype O:23/36 (strain 81-176).